The primary structure comprises 875 residues: MNFRLLEKYDPKAFEDEIYNKWLKNNVFLPNNSLFEKFSMVAPPPNVTGVLHMGHALNFVLQDILVRYKRMKKHNTLWLFGTDHAGIATQTVFERNLKNIGKSKNDFEREEFVKEIFKLKDKHRGVIVNQIKKLGASYDHSRERFTLDESLCKAVNKVFKDLYSKGLIYRGEYLVNLDPGSGSVVSDEEIEYKEVDGKLYFVKYFIDDSSFIEIATTRPETMFGDTAIAVNPNDERYKSLVGKEVTIPLTTKKIKIIADFHVDSAFGTGALKITPAHDPNDFEISKRHNIPKVNILTQDGKLNENVPLQYQGLSIKDARFKIEIELMEKGFLKGVKKHRQQVGHCYRSGEVIEPYLSTQWFVSMKPLAEKALKALESGELRFYPKKWENTYKYWLSNIKDWCISRQLVWGHRIPAWYNIDTSELIISDTDPSLDEKNVGKRFVQDPDVLDTWFSSWLWPFSSLGWPNITVDFENYYPTKTLITAYDIIFFWVARMVMAGLEFTGQTPFRDVYITPLLRDKQGKKMSKSLGNGIDPLDIIHEYGSDSLRFTLSFLSVQGQDLNIDAKDFMLGAKFANKVFNASKFILLNLENREIFNNLKFNDIDKWLLTSLNSTILGVESSFANYKYNEASKFVYEFFWNDFCDWYIEISKIDLNSENVDIQNMAISKLLFFLKKALLILHPFIPFVTEKIYSEFSEKGDILALNEYPSFDISSNFKEEFESFKVFKTFIVAVRTLKSEFNISSSIEIDVALKFDSDFKYEGYFKANESISKRMINFKNIFYNENCDGMLGLAVVGFEIYADVKLLIDKTKELIRLEKQLEKYKMLKISVSKKLENENFLMNAPKEIIESEKLKFVEFSSLINKINSYIINLKNL.

The 'HIGH' region motif lies at 45 to 55 (PNVTGVLHMGH). The short motif at 524 to 528 (KMSKS) is the 'KMSKS' region element. Lys527 is an ATP binding site. Residues 803-837 (VKLLIDKTKELIRLEKQLEKYKMLKISVSKKLENE) are a coiled coil.

The protein belongs to the class-I aminoacyl-tRNA synthetase family. ValS type 1 subfamily. As to quaternary structure, monomer.

The protein resides in the cytoplasm. It catalyses the reaction tRNA(Val) + L-valine + ATP = L-valyl-tRNA(Val) + AMP + diphosphate. Its function is as follows. Catalyzes the attachment of valine to tRNA(Val). As ValRS can inadvertently accommodate and process structurally similar amino acids such as threonine, to avoid such errors, it has a 'posttransfer' editing activity that hydrolyzes mischarged Thr-tRNA(Val) in a tRNA-dependent manner. In Borrelia garinii subsp. bavariensis (strain ATCC BAA-2496 / DSM 23469 / PBi) (Borreliella bavariensis), this protein is Valine--tRNA ligase.